We begin with the raw amino-acid sequence, 232 residues long: Probable ADP-ribosylation factor GTPase-activating protein AGD15 (232 aa).

One can recognise an Arf-GAP domain in the interval 16-130 (SKILEALLKH…RWVSPGAIQP (115 aa)). Residues 31 to 54 (CADCRSKAPRWASVNLGIFICMQC) form a C4-type zinc finger. Residues 203–232 (PNQKNENFSSEVNQNRRTTIAPPSSWATFD) form a disordered region. Over residues 206–232 (KNENFSSEVNQNRRTTIAPPSSWATFD) the composition is skewed to polar residues.

In terms of biological role, GTPase-activating protein (GAP) for ADP ribosylation factor (ARF). This Arabidopsis thaliana (Mouse-ear cress) protein is Probable ADP-ribosylation factor GTPase-activating protein AGD15 (AGD15).